We begin with the raw amino-acid sequence, 440 residues long: Elongation factor 1-gamma (440 aa).

Alanine 2 carries the N-acetylalanine modification. The GST N-terminal domain maps to 2–87 (AAGTLYTYPE…YVSNEELRGS (86 aa)). Positions 88–216 (TPEAAAQVVQ…VKLCEKMAQF (129 aa)) constitute a GST C-terminal domain. 2 positions are modified to N6-acetyllysine: lysine 147 and lysine 212. Over residues 221-257 (FAESQPKKDTPRKEKGSREEKLKPQAERKEGKEEKKA) the composition is skewed to basic and acidic residues. The interval 221–267 (FAESQPKKDTPRKEKGSREEKLKPQAERKEGKEEKKAAAPAPEEELD) is disordered. Residue lysine 256 forms a Glycyl lysine isopeptide (Lys-Gly) (interchain with G-Cter in SUMO1) linkage. The EF-1-gamma C-terminal domain occupies 279–440 (AKDPFAHLPK…KAFNQGKIFK (162 aa)). Residue lysine 288 forms a Glycyl lysine isopeptide (Lys-Gly) (interchain with G-Cter in SUMO2) linkage. Lysine 404 bears the N6-acetyllysine mark. Lysine 437 is subject to N6-acetyllysine; alternate. Lysine 437 is modified (N6-malonyllysine; alternate).

As to quaternary structure, EF-1 is composed of four subunits: alpha, beta, delta, and gamma.

Its function is as follows. Probably plays a role in anchoring the complex to other cellular components. The protein is Elongation factor 1-gamma (EEF1G) of Bos taurus (Bovine).